Consider the following 260-residue polypeptide: Alpha-acetolactate decarboxylase (260 aa).

Belongs to the alpha-acetolactate decarboxylase family.

It catalyses the reaction (2S)-2-acetolactate + H(+) = (R)-acetoin + CO2. It functions in the pathway polyol metabolism; (R,R)-butane-2,3-diol biosynthesis; (R,R)-butane-2,3-diol from pyruvate: step 2/3. Converts acetolactate into acetoin, which can be excreted by the cells. This may be a mechanism for controlling the internal pH of cells in the stationary stage. This chain is Alpha-acetolactate decarboxylase (budA), found in Klebsiella aerogenes (Enterobacter aerogenes).